An 894-amino-acid polypeptide reads, in one-letter code: MAVKSQLGVTYTTKTFPPSPPRTVGNSHAGSDDERDEVDATPTTPPVEKLGQLLKPYSLPPTNTPTHVLPEDLKTPDHRVNRDPRLIRLTGVHPFNVEPPLTDLYDEGFLNSENLHYVRNHGPVPHCPDDESLNWTFTVDGLVEKPFTIAVRDLIQKYDQFTYPVTLVCAGNRRKEQNVVRKSKGFSWGAAGLSTALWTGVPIGALLRMAKPKRAAKYVCFEGADKLPNGYYGTSVKLNWCMDENRGIMVAHKMNGQSLHPDHGKPVRIIIPGQIGGRSVKWLKKITITSEPSDNWYHIYDNRVLPTTISPDASANLPDVWKDEKYAIYDLNANSAICYPRHDERLVLATAPDTYKVRGYAYGGGGKRITRLEVTLNKGKSWLLAGIHYPEDDYRRAPDGDLLYGGSTDMWWRETCFCWCFWEIDIPVADLSAADDIMIRAMDEGMMVQPRDMYWSVLGMMNNPWFRVVIHKEDGALRFEHPTQPALMPGGWMERVKRRGGNLTNGFWGEKTAAEEEQVLAEPEKEICMTNPKVVRIISLEELKAHEGEMEPWFVVNGHVYNGTPYLDNHPGGATSIINAAAQDATEEFMTIHSENAKAMMPQYHIGTLNDAARKALEGSAEESPASDPTRAVFLQPKYWSKAILETKTDVSSDSKIFSFRLDHAAQSIGLPTGQHLLVRLRDPATREAVIRAYTPLSETHAKGQLDILIKIYRDVPGQPGGKMTQALDSIPLGHFVDIKGPVGKFEYLGKGHCTVSGTSRHVRRFVMICAGSGVTPIFQVLRAVTSDAQDGTECLVLDGNRCEKDILCREELDAMVARAPARTTLLHKLSRPDASWCGLRGRMDKEYLEEHIGGFRKSDGREMVLVCGPAALEETVRSVLVEMAWKPEDMLFF.

Positions 1–79 are disordered; the sequence is MAVKSQLGVT…PEDLKTPDHR (79 aa). The segment covering 7-16 has biased composition (polar residues); it reads LGVTYTTKTF. Positions 69–79 are enriched in basic and acidic residues; the sequence is LPEDLKTPDHR. Cys169 is a binding site for Mo-molybdopterin. One can recognise a Cytochrome b5 heme-binding domain in the interval 535–610; sequence VRIISLEELK…MPQYHIGTLN (76 aa). His570 and His593 together coordinate heme. An FAD-binding FR-type domain is found at 638 to 749; it reads KYWSKAILET…KGPVGKFEYL (112 aa). Residues 692-695, 709-713, 723-725, Ser773, and Thr776 each bind FAD; these read RAYT, LIKIY, and KMT.

Belongs to the nitrate reductase family. In terms of assembly, homodimer. Requires FAD as cofactor. Heme serves as cofactor. Mo-molybdopterin is required as a cofactor.

It catalyses the reaction nitrite + NADP(+) + H2O = nitrate + NADPH + H(+). Nitrate reductase is a key enzyme involved in the first step of nitrate assimilation in plants, fungi and bacteria. In Beauveria bassiana (White muscardine disease fungus), this protein is Nitrate reductase [NADPH] (NIA).